The primary structure comprises 779 residues: Phosphatidylinositol 4-phosphate 5-kinase 4 (779 aa).

A disordered region spans residues 20 to 61; sequence QQAKKRANSIFGTVSVAPQTDDDATTTTEENDDETSTNRSSI. Residues 39–54 are compositionally biased toward acidic residues; the sequence is TDDDATTTTEENDDET. 8 MORN repeats span residues 77 to 99, 100 to 122, 123 to 145, 146 to 168, 169 to 191, 192 to 214, 215 to 237, and 238 to 259; these read YTGQ…DGCM, YIGD…SGAT, YEGE…SGDT, YKGQ…NGDV, YDGE…DGSY, YMGE…DGNR, YDGF…DGSF, and YVGH…SGDD. The region spanning 382-775 is the PIPK domain; it reads TISKGHRNYE…RFRDFIFKVF (394 aa). The interval 735-756 is activation loop; the sequence is YDISKKLEHAYKSIQYDPTSIS.

It catalyses the reaction a 1,2-diacyl-sn-glycero-3-phospho-(1D-myo-inositol 4-phosphate) + ATP = a 1,2-diacyl-sn-glycero-3-phospho-(1D-myo-inositol-4,5-bisphosphate) + ADP + H(+). The sequence is that of Phosphatidylinositol 4-phosphate 5-kinase 4 (PIP5K4) from Arabidopsis thaliana (Mouse-ear cress).